Reading from the N-terminus, the 367-residue chain is Bi-functional coumaroyl CoA and feruloyl CoA ortho-hydroxylase Diox4 (367 aa).

In terms of domain architecture, Fe2OG dioxygenase spans 207 to 317; that stretch reads IREPMLVGSR…RISVPLFVNP (111 aa). Tyr-223 lines the 2-oxoglutarate pocket. Fe cation-binding residues include His-238, Asp-240, and His-298. The 2-oxoglutarate site is built by Arg-308 and Ser-310.

The protein belongs to the iron/ascorbate-dependent oxidoreductase family. L-ascorbate serves as cofactor. Fe(2+) is required as a cofactor.

It catalyses the reaction (E)-4-coumaroyl-CoA + 2-oxoglutarate + O2 = (E)-2,4-dihydroxycinnamoyl-CoA + succinate + CO2. It carries out the reaction (E)-feruloyl-CoA + 2-oxoglutarate + O2 = (E)-6-hydroxyferuloyl-CoA + succinate + CO2. The protein operates within phenylpropanoid metabolism. Repressed by the competitive inhibitor psoralen, but not by umbelliferone, xanthotoxin, bergapten and isopimpinellin. Functionally, 2-oxoglutarate (OG)- and Fe(II)-dependent dioxygenase (2OGD) involved in scopoletin and umbelliferone biosynthesis. Converts feruloyl CoA into 6'-hydroxyferuloyl CoA, and p-coumaroyl CoA into 2,4-dihydroxycinnamoyl-CoA. Has no activity with cinnamic acid, caffeic acid, p-coumaric acid, ferulic acid, cinnamoyl-CoA and caffeoyl-CoA. In Ruta graveolens (Common rue), this protein is Bi-functional coumaroyl CoA and feruloyl CoA ortho-hydroxylase Diox4.